Consider the following 291-residue polypeptide: BTB/POZ domain-containing protein 19 (291 aa).

Residues 29 to 98 (SDVRFVVGQE…LYTNSAKLQR (70 aa)) enclose the BTB domain. In terms of domain architecture, BACK spans 134-234 (CEALQVAVTF…LALLAPAELS (101 aa)).

The sequence is that of BTB/POZ domain-containing protein 19 (BTBD19) from Bos taurus (Bovine).